The chain runs to 520 residues: DDB1- and CUL4-associated factor 17 (520 aa).

The next 2 helical transmembrane spans lie at 186–206 and 222–242; these read VLLY…ILEI and GILI…QTIA.

As to quaternary structure, interacts with DDB1, CUL4A and CUL4B. In terms of tissue distribution, ubiquitously expressed.

It localises to the membrane. The protein localises to the nucleus. It is found in the nucleolus. It participates in protein modification; protein ubiquitination. In terms of biological role, may function as a substrate receptor for CUL4-DDB1 E3 ubiquitin-protein ligase complex. The sequence is that of DDB1- and CUL4-associated factor 17 (DCAF17) from Homo sapiens (Human).